The primary structure comprises 258 residues: Ferredoxin--NADP reductase (258 aa).

The 101-residue stretch at 2–102 (SNLNVERVLS…RKPTGTLVTS (101 aa)) folds into the FAD-binding FR-type domain. Residue Asp-17 participates in NADP(+) binding. Residues 51 to 54 (RAYS), 67 to 69 (FSI), 74 to 77 (GPLT), and Thr-117 each bind FAD. NADP(+) is bound by residues 144-145 (VR), 181-182 (TR), and Arg-190. Residue 254-258 (AFVEK) coordinates FAD.

The protein belongs to the ferredoxin--NADP reductase type 1 family. As to quaternary structure, monomer. Requires FAD as cofactor.

It catalyses the reaction 2 reduced [2Fe-2S]-[ferredoxin] + NADP(+) + H(+) = 2 oxidized [2Fe-2S]-[ferredoxin] + NADPH. Its function is as follows. Transports electrons between ferredoxin and NADPH. This chain is Ferredoxin--NADP reductase, found in Azotobacter vinelandii.